We begin with the raw amino-acid sequence, 876 residues long: Serrate RNA effector molecule homolog (876 aa).

The disordered stretch occupies residues 1 to 90 (MGDSDDEYDR…RRDWDEHSSD (90 aa)). Glycine 2 bears the N-acetylglycine mark. Serine 4 is subject to Phosphoserine. Tyrosine 8 carries the phosphotyrosine modification. Basic and acidic residues predominate over residues 8 to 73 (YDRRRRDKFR…ERFSPPRHEL (66 aa)). A phosphoserine mark is found at serine 67, serine 74, and serine 136. Residue lysine 150 forms a Glycyl lysine isopeptide (Lys-Gly) (interchain with G-Cter in SUMO2) linkage. The interval 271–412 (EEEEEQAGKP…KPKDAAGLEC (142 aa)) is disordered. A compositionally biased stretch (basic and acidic residues) spans 297–347 (DGERKTNDKDEKKEDGKQAENDSSNDDKTKKSEGDGDKEEKKEDSEKEAKK). The span at 370–387 (SESESESGQAEEEKEEAE) shows a compositional bias: acidic residues. The segment covering 388–412 (EALKEKEKPKEEEWEKPKDAAGLEC) has biased composition (basic and acidic residues). A phosphoserine mark is found at serine 493 and serine 540. A Phosphothreonine modification is found at threonine 544. Residue serine 570 is modified to Phosphoserine. The tract at residues 575 to 598 (ELLGSSGGAPPEEPPKEGNPAEIN) is disordered. Threonine 671 carries the phosphothreonine modification. Serine 679 is modified (phosphoserine). Omega-N-methylarginine occurs at positions 833, 840, and 850. Residues 835 to 854 (NYDAFRGQGGYPGKPRNRMV) form a disordered region.

It belongs to the ARS2 family. In terms of assembly, interacts with NCBP1 and DROSHA. Interacts with CASP8AP2 and ERBB4. Interacts with LUZP4. Interacts with NCBP2/CBP20 and NCBP3. Interacts with MTREX. In terms of tissue distribution, ubiquitously expressed.

The protein localises to the nucleus. Its subcellular location is the nucleoplasm. It is found in the cytoplasm. In terms of biological role, acts as a mediator between the cap-binding complex (CBC) and the primary microRNAs (miRNAs) processing machinery during cell proliferation. Contributes to the stability and delivery of capped primary miRNA transcripts to the primary miRNA processing complex containing DGCR8 and DROSHA, thereby playing a role in RNA-mediated gene silencing (RNAi) by miRNAs. Binds capped RNAs (m7GpppG-capped RNA); however interaction is probably mediated via its interaction with NCBP1/CBP80 component of the CBC complex. Involved in cell cycle progression at S phase. Does not directly confer arsenite resistance but rather modulates arsenic sensitivity. Independently of its activity on miRNAs, necessary and sufficient to promote neural stem cell self-renewal. Does so by directly binding SOX2 promoter and positively regulating its transcription. This chain is Serrate RNA effector molecule homolog (SRRT), found in Homo sapiens (Human).